Reading from the N-terminus, the 55-residue chain is Large ribosomal subunit protein bL32c (55 aa).

The protein belongs to the bacterial ribosomal protein bL32 family.

The protein localises to the plastid. Its subcellular location is the chloroplast. In Atropa belladonna (Belladonna), this protein is Large ribosomal subunit protein bL32c.